Consider the following 561-residue polypeptide: MNSSLTAQRRGSDAELGPWVMAARSKDAAPSQRDGLLPVKVEEDSLGSWEPSYPAASPDPETSRLHFRQLRYQEVAGPEEALSRLRELCRRWLRPELLSKEQILELLVLEQFLTILPEELQAWVREHCPESGEEAVAVVRALQRALDGTSSQGMVTFEDMAVSLTWEEWERLDPARSDFCRESAQKDSGSTVPPSLESRVENKELIPVQQILEEAEPQGRLQEAFQGKRPLFSKCVSTHEDRVEKQSGDPLPLKLENSPEAEGFNSISDVNKNGSIEGEDSKNNELQNSARCSNLVLCQHIPKAERPTDSEEHGNKCKQSFHMVTWHVLKPHKSDSGDSFHHSSLFETQRQLHEERPYKCGNCGKSFKQRSDLFRHQRIHTGEKPYGCQECGKSFSQSAALTKHQRTHTGEKPYTCLKCGERFRQNSHLNRHQSTHSRDKHFKCEECGETCHISNLFRHQRLHKGERPYKCEECEKSFKQRSDLFKHHRIHTGEKPYGCSVCGKRFNQSATLIKHQRIHTGEKPYKCLECGERFRQSTHLIRHQRIHQNKVLSAGRGGSRL.

Ser-12 is modified (phosphoserine). Lys-40 is covalently cross-linked (Glycyl lysine isopeptide (Lys-Gly) (interchain with G-Cter in SUMO2)). The tract at residues 43 to 62 (EDSLGSWEPSYPAASPDPET) is disordered. Residues 64–146 (RLHFRQLRYQ…AVVRALQRAL (83 aa)) form the SCAN box domain. The region spanning 155–230 (VTFEDMAVSL…LQEAFQGKRP (76 aa)) is the KRAB domain. Glycyl lysine isopeptide (Lys-Gly) (interchain with G-Cter in SUMO2) cross-links involve residues Lys-203 and Lys-228. Residues 238-247 (THEDRVEKQS) show a composition bias toward basic and acidic residues. Positions 238–283 (THEDRVEKQSGDPLPLKLENSPEAEGFNSISDVNKNGSIEGEDSKN) are disordered. Residue Lys-254 forms a Glycyl lysine isopeptide (Lys-Gly) (interchain with G-Cter in SUMO2) linkage. Over residues 265 to 274 (NSISDVNKNG) the composition is skewed to polar residues. Lys-282 participates in a covalent cross-link: Glycyl lysine isopeptide (Lys-Gly) (interchain with G-Cter in SUMO2). 7 C2H2-type zinc fingers span residues 358–380 (YKCG…QRIH), 386–408 (YGCQ…QRTH), 414–436 (YTCL…QSTH), 442–463 (FKCE…QRLH), 469–491 (YKCE…HRIH), 497–519 (YGCS…QRIH), and 525–547 (YKCL…QRIH). A Glycyl lysine isopeptide (Lys-Gly) (interchain with G-Cter in SUMO2) cross-link involves residue Lys-443.

This sequence belongs to the krueppel C2H2-type zinc-finger protein family.

It localises to the nucleus. May be involved in transcriptional regulation. This Pan paniscus (Pygmy chimpanzee) protein is Zinc finger protein 394 (ZNF394).